The primary structure comprises 473 residues: H(+)/Cl(-) exchange transporter ClcA (473 aa).

At 1–32 (MKTDTSTFLAQQIVRLRRRDQIRRLMQRDKTP) the chain is on the cytoplasmic side. Residues 33–69 (LAILFMAAVVGTLTGLVGVAFEKTVSWVQNMRIGALV) traverse the membrane as a helical segment. The Periplasmic segment spans residues 70–76 (QVADHAF). A helical membrane pass occupies residues 77–100 (LLWPLAFILSALLAMVGYFLVRKF). Positions 106-110 (GSGIP) match the Selectivity filter part_1 motif. Ser107 lines the chloride pocket. Residues 109–116 (IPEIEGAL) constitute an intramembrane region (helical). The Cytoplasmic portion of the chain corresponds to 117-123 (EELRPVR). A run of 2 helical transmembrane segments spans residues 124–141 (WWRVLPVKFIGGMGTLGA) and 148–166 (EGPTVQIGGNLGRMVLDVF). Residues 146 to 150 (GREGP) carry the Selectivity filter part_2 motif. At 167–176 (RMRSAEARHT) the chain is on the cytoplasmic side. 2 intramembrane regions (helical) span residues 177 to 189 (LLATGAAAGLSAA) and 193 to 201 (PLAGILFII). The Cytoplasmic segment spans residues 202–214 (EEMRPQFRYNLIS). The helical transmembrane segment at 215-232 (IKAVFTGVIMSSIVFRIF) threads the bilayer. The Periplasmic portion of the chain corresponds to 233–252 (NGEAPIIEVGKLSDAPVNTL). The chain crosses the membrane as a helical span at residues 253 to 281 (WLYLILGIIFGCVGPVFNSLVLRTQDMFQ). Residues 282–287 (RFHGGE) lie on the Cytoplasmic side of the membrane. Residues 288-309 (IKKWVLMGGAIGGLCGILGLIE) form a helical membrane-spanning segment. Over 310 to 329 (PAAAGGGFNLIPIAAAGNFS) the chain is Periplasmic. A run of 2 helical transmembrane segments spans residues 330-349 (VGLLLFIFITRVVTTLLCFS) and 355-376 (GIFAPMLALGTLLGTAFGMAAA). Residues 355–359 (GIFAP) carry the Selectivity filter part_3 motif. 2 residues coordinate chloride: Ile356 and Phe357. Topologically, residues 377-386 (VLFPQYHLEA) are periplasmic. Residues 387–401 (GTFAIAGMGALMAAS) constitute an intramembrane region (helical). Residues 402–404 (VRA) constitute an intramembrane region (note=Loop between two helices). Residues 405–416 (PLTGIVLVLEMT) constitute an intramembrane region (helical). Residues 417–421 (DNYQL) constitute an intramembrane region (note=Loop between two helices). A helical transmembrane segment spans residues 422–438 (ILPMIITCLGATLLAQF). The Cytoplasmic portion of the chain corresponds to 439–473 (LGGKPLYSTILARTLAKQDAEQAAKNQNAPAGENT). Residue Tyr445 participates in chloride binding.

The protein belongs to the chloride channel (TC 2.A.49) family. ClcA subfamily. In terms of assembly, homodimer.

The protein localises to the cell inner membrane. It carries out the reaction 2 chloride(in) + H(+)(out) = 2 chloride(out) + H(+)(in). In terms of biological role, proton-coupled chloride transporter. Functions as antiport system and exchanges two chloride ions for 1 proton. Probably acts as an electrical shunt for an outwardly-directed proton pump that is linked to amino acid decarboxylation, as part of the extreme acid resistance (XAR) response. The polypeptide is H(+)/Cl(-) exchange transporter ClcA (Salmonella typhi).